A 278-amino-acid chain; its full sequence is Putative cysteine-rich repeat secretory protein 19 (278 aa).

Positions 1 to 32 are cleaved as a signal peptide; that stretch reads MYSSSSVSKRFVLVPIVVVVTTQLLLVRNVSS. 2 Gnk2-homologous domains span residues 39–147 and 160–267; these read YLHH…SLDT and PSAK…LYPF.

It belongs to the cysteine-rich repeat secretory protein family.

Its subcellular location is the secreted. The sequence is that of Putative cysteine-rich repeat secretory protein 19 (CRRSP19) from Arabidopsis thaliana (Mouse-ear cress).